The primary structure comprises 464 residues: Nuclear distribution protein nudF 2 (464 aa).

A LisH domain is found at 9–41 (QAAELNKSIIAYLSAHGLAETLAAFRKESDFPD). A coiled-coil region spans residues 63–88 (NSTLMKKLLALESHNKALRNELNSTR). 8 WD repeats span residues 112-151 (SHRD…LERT), 154-195 (GHTM…KNVK), 199-238 (GHDH…RVKT), 241-280 (DHTG…PICK), 285-343 (GHEN…MTLT), 344-383 (GHAS…RCVK), 388-424 (AHDG…AELP), and 426-464 (SKLD…RSHK).

This sequence belongs to the WD repeat LIS1/nudF family. In terms of assembly, self-associates. Interacts with nudE and dynein.

The protein resides in the cytoplasm. The protein localises to the cytoskeleton. It localises to the spindle pole. In terms of biological role, positively regulates the activity of the minus-end directed microtubule motor protein dynein. May enhance dynein-mediated microtubule sliding by targeting dynein to the microtubule plus end. Required for nuclear migration during vegetative growth as well as development. Required for retrograde early endosome (EE) transport from the hyphal tip. Required for localization of dynein to the mitotic spindle poles. Recruits additional proteins to the dynein complex at SPBs. The polypeptide is Nuclear distribution protein nudF 2 (Penicillium rubens (strain ATCC 28089 / DSM 1075 / NRRL 1951 / Wisconsin 54-1255) (Penicillium chrysogenum)).